The primary structure comprises 1238 residues: DNA-directed RNA polymerase subunit beta (1238 aa).

It belongs to the RNA polymerase beta chain family. In terms of assembly, the RNAP catalytic core consists of 2 alpha, 1 beta, 1 beta' and 1 omega subunit. When a sigma factor is associated with the core the holoenzyme is formed, which can initiate transcription.

It catalyses the reaction RNA(n) + a ribonucleoside 5'-triphosphate = RNA(n+1) + diphosphate. In terms of biological role, DNA-dependent RNA polymerase catalyzes the transcription of DNA into RNA using the four ribonucleoside triphosphates as substrates. The protein is DNA-directed RNA polymerase subunit beta of Clostridioides difficile (strain 630) (Peptoclostridium difficile).